Here is a 240-residue protein sequence, read N- to C-terminus: Large ribosomal subunit protein uL1 (240 aa).

It belongs to the universal ribosomal protein uL1 family. Part of the 50S ribosomal subunit.

In terms of biological role, binds directly to 23S rRNA. The L1 stalk is quite mobile in the ribosome, and is involved in E site tRNA release. Functionally, protein L1 is also a translational repressor protein, it controls the translation of the L11 operon by binding to its mRNA. This is Large ribosomal subunit protein uL1 from Nocardioides sp. (strain ATCC BAA-499 / JS614).